The chain runs to 440 residues: Ribulose bisphosphate carboxylase large chain (440 aa).

Residue Lys-4 is modified to N6,N6,N6-trimethyllysine. Asn-113 and Thr-163 together coordinate substrate. Catalysis depends on Lys-165, which acts as the Proton acceptor. Substrate is bound at residue Lys-167. Residues Lys-191, Asp-193, and Glu-194 each coordinate Mg(2+). Lys-191 carries the N6-carboxylysine modification. The active-site Proton acceptor is His-284. Substrate contacts are provided by Arg-285, His-317, and Ser-369.

Belongs to the RuBisCO large chain family. Type I subfamily. Heterohexadecamer of 8 large chains and 8 small chains; disulfide-linked. The disulfide link is formed within the large subunit homodimers. The cofactor is Mg(2+). In terms of processing, the disulfide bond which can form in the large chain dimeric partners within the hexadecamer appears to be associated with oxidative stress and protein turnover.

It is found in the plastid. Its subcellular location is the chloroplast. The catalysed reaction is 2 (2R)-3-phosphoglycerate + 2 H(+) = D-ribulose 1,5-bisphosphate + CO2 + H2O. The enzyme catalyses D-ribulose 1,5-bisphosphate + O2 = 2-phosphoglycolate + (2R)-3-phosphoglycerate + 2 H(+). RuBisCO catalyzes two reactions: the carboxylation of D-ribulose 1,5-bisphosphate, the primary event in carbon dioxide fixation, as well as the oxidative fragmentation of the pentose substrate in the photorespiration process. Both reactions occur simultaneously and in competition at the same active site. This Onoclea sensibilis (Sensitive fern) protein is Ribulose bisphosphate carboxylase large chain.